A 495-amino-acid chain; its full sequence is Cytochrome P450 Tp4149 (495 aa).

Helical transmembrane passes span 4 to 24 (ILSL…MFFI) and 208 to 228 (YLSM…SWVD). The N-linked (GlcNAc...) asparagine glycan is linked to Asn-419. Position 437 (Cys-437) interacts with heme.

This sequence belongs to the cytochrome P450 family. Requires heme as cofactor.

It localises to the membrane. It functions in the pathway secondary metabolite biosynthesis; terpenoid biosynthesis. Probably involved in the biosynthesis of germacrene-derived sesquiterpene lactones. This chain is Cytochrome P450 Tp4149, found in Tanacetum parthenium (Feverfew).